The primary structure comprises 133 residues: P2Y purinoceptor 2 (133 aa).

The Cytoplasmic segment spans residues 1-26 (ISVHRCLGVLRPLHSLRWGRARYARR). The helical transmembrane segment at 27–47 (VAFAVWVLVLYCQAPVLYFVT) threads the bilayer. The Extracellular portion of the chain corresponds to 48 to 74 (TSTRSSRIICHDTSARELFSHFVAYSS). The helical transmembrane segment at 75-95 (VMLSLLFAAPFAVILVCYVLM) threads the bilayer. Residues 96 to 116 (ARRLLKPAYGTSGGLPRAKRK) lie on the Cytoplasmic side of the membrane. A helical membrane pass occupies residues 117 to 133 (SVRTIAIVLTVFVLCFL).

This sequence belongs to the G-protein coupled receptor 1 family.

Its subcellular location is the cell membrane. Receptor for ATP and UTP coupled to G-proteins that activate a phosphatidylinositol-calcium second messenger system. The protein is P2Y purinoceptor 2 (P2RY2) of Bos taurus (Bovine).